The primary structure comprises 216 residues: 4-hydroxy-tetrahydrodipicolinate reductase (216 aa).

NAD(+) is bound by residues 7–12, 71–73, and 95–98; these read GYSGRM, GTT, and AYNF. The Proton donor/acceptor role is filled by H127. H128 provides a ligand contact to (S)-2,3,4,5-tetrahydrodipicolinate. The Proton donor role is filled by K131. A (S)-2,3,4,5-tetrahydrodipicolinate-binding site is contributed by 137–138; the sequence is GT.

This sequence belongs to the DapB family.

It localises to the cytoplasm. The catalysed reaction is (S)-2,3,4,5-tetrahydrodipicolinate + NAD(+) + H2O = (2S,4S)-4-hydroxy-2,3,4,5-tetrahydrodipicolinate + NADH + H(+). It catalyses the reaction (S)-2,3,4,5-tetrahydrodipicolinate + NADP(+) + H2O = (2S,4S)-4-hydroxy-2,3,4,5-tetrahydrodipicolinate + NADPH + H(+). The protein operates within amino-acid biosynthesis; L-lysine biosynthesis via DAP pathway; (S)-tetrahydrodipicolinate from L-aspartate: step 4/4. In terms of biological role, catalyzes the conversion of 4-hydroxy-tetrahydrodipicolinate (HTPA) to tetrahydrodipicolinate. The polypeptide is 4-hydroxy-tetrahydrodipicolinate reductase (Thermotoga sp. (strain RQ2)).